The following is a 600-amino-acid chain: UvrABC system protein C (600 aa).

The region spanning 15-92 (EKAGCYLMKD…IKKYQPYYNV (78 aa)) is the GIY-YIG domain. In terms of domain architecture, UVR spans 197–232 (QEVKKDLTNKMLQASADLEFERAGELRDQLKYIEET).

Belongs to the UvrC family. In terms of assembly, interacts with UvrB in an incision complex.

It is found in the cytoplasm. In terms of biological role, the UvrABC repair system catalyzes the recognition and processing of DNA lesions. UvrC both incises the 5' and 3' sides of the lesion. The N-terminal half is responsible for the 3' incision and the C-terminal half is responsible for the 5' incision. This is UvrABC system protein C from Lactobacillus delbrueckii subsp. bulgaricus (strain ATCC BAA-365 / Lb-18).